Here is a 477-residue protein sequence, read N- to C-terminus: AAA-ATPase At3g28600 (477 aa).

Positions Met-1–Pro-26 are cleaved as a signal peptide. Gly-245–Ser-252 is a binding site for ATP.

The protein belongs to the AAA ATPase family. BCS1 subfamily. Mg(2+) is required as a cofactor.

It catalyses the reaction ATP + H2O = ADP + phosphate + H(+). This chain is AAA-ATPase At3g28600, found in Arabidopsis thaliana (Mouse-ear cress).